The sequence spans 220 residues: Uracil phosphoribosyltransferase 2 (220 aa).

77-80 (ARDI) contributes to the GTP binding site. Positions 87 and 113 each coordinate 5-phospho-alpha-D-ribose 1-diphosphate. R134 serves as a coordination point for GTP. Residues D140 and 140-148 (DPLLATGNS) contribute to the 5-phospho-alpha-D-ribose 1-diphosphate site. D-ribose 5-phosphate is bound at residue Y204. Residues V205 and 210-212 (GDF) contribute to the uracil site. Residue D211 coordinates 5-phospho-alpha-D-ribose 1-diphosphate.

This sequence belongs to the UPRTase family. Mg(2+) is required as a cofactor.

The enzyme catalyses UMP + diphosphate = 5-phospho-alpha-D-ribose 1-diphosphate + uracil. It participates in pyrimidine metabolism; UMP biosynthesis via salvage pathway; UMP from uracil: step 1/1. Allosterically activated by GTP. Its function is as follows. Catalyzes the conversion of uracil and 5-phospho-alpha-D-ribose 1-diphosphate (PRPP) to UMP and diphosphate. The protein is Uracil phosphoribosyltransferase 2 of Schizosaccharomyces pombe (strain 972 / ATCC 24843) (Fission yeast).